A 378-amino-acid polypeptide reads, in one-letter code: MIINNVKLVLENEVVSGSLEVQNGEIRAFAESQSRLPEAMDGEGGWLLPGLIELHTDNLDKFFTPRPKVDWPAHSAMSSHDALMVASGITTVLDAVAIGDVRDGGDRLENLEKMINAIEETQKRGVNRAEHRLHLRCELPHHTTLPLFEKLVQREPVTLVSLMDHSPGQRQFANREKYREYYQGKYSLTDAQMQQYEEEQLALAARWSQPNRESIAALCRARKIALASHDDATHAHVAESHQLGSVIAEFPTTFEAAEASRKHGMNVLMGAPNIVRGGSHSGNVAASELAQLGLLDILSSDYYPASLLDAAFRVADDQSNRFTLPQAVKLVTKNPAQALNLQDRGVIGEGKRADLVLAHRKDNHIHIDHVWRQGKRVF.

This sequence belongs to the metallo-dependent hydrolases superfamily.

The enzyme catalyses alpha-D-ribose 1-methylphosphonate 5-triphosphate + H2O = alpha-D-ribose 1-methylphosphonate 5-phosphate + diphosphate + H(+). Functionally, catalyzes the hydrolysis of alpha-D-ribose 1-methylphosphonate triphosphate (RPnTP) to form alpha-D-ribose 1-methylphosphonate phosphate (PRPn) and diphosphate. The polypeptide is Alpha-D-ribose 1-methylphosphonate 5-triphosphate diphosphatase (phnM) (Escherichia coli (strain K12)).